Reading from the N-terminus, the 353-residue chain is Photosystem II D2 protein (353 aa).

N-acetylthreonine is present on Thr-2. Thr-2 carries the post-translational modification Phosphothreonine. The helical transmembrane segment at 41-61 (CAYFALGGWFTGTTFVTSWYT) threads the bilayer. His-118 provides a ligand contact to chlorophyll a. A helical membrane pass occupies residues 125–141 (GFMLRQFELARSVQLRP). Pheophytin a is bound by residues Gln-130 and Asn-143. Residues 153 to 166 (VFVSVFLIYPLGQS) form a helical membrane-spanning segment. Position 198 (His-198) interacts with chlorophyll a. Residues 208 to 228 (AALLCAIHGATVENTLFEDGD) traverse the membrane as a helical segment. A plastoquinone contacts are provided by His-215 and Phe-262. His-215 provides a ligand contact to Fe cation. His-269 provides a ligand contact to Fe cation. The chain crosses the membrane as a helical span at residues 279 to 295 (GLWMSALGVVGLALNLR).

It belongs to the reaction center PufL/M/PsbA/D family. As to quaternary structure, PSII is composed of 1 copy each of membrane proteins PsbA, PsbB, PsbC, PsbD, PsbE, PsbF, PsbH, PsbI, PsbJ, PsbK, PsbL, PsbM, PsbT, PsbX, PsbY, PsbZ, Psb30/Ycf12, at least 3 peripheral proteins of the oxygen-evolving complex and a large number of cofactors. It forms dimeric complexes. Requires The D1/D2 heterodimer binds P680, chlorophylls that are the primary electron donor of PSII, and subsequent electron acceptors. It shares a non-heme iron and each subunit binds pheophytin, quinone, additional chlorophylls, carotenoids and lipids. There is also a Cl(-1) ion associated with D1 and D2, which is required for oxygen evolution. The PSII complex binds additional chlorophylls, carotenoids and specific lipids. as cofactor.

Its subcellular location is the plastid. It is found in the chloroplast thylakoid membrane. The enzyme catalyses 2 a plastoquinone + 4 hnu + 2 H2O = 2 a plastoquinol + O2. Photosystem II (PSII) is a light-driven water:plastoquinone oxidoreductase that uses light energy to abstract electrons from H(2)O, generating O(2) and a proton gradient subsequently used for ATP formation. It consists of a core antenna complex that captures photons, and an electron transfer chain that converts photonic excitation into a charge separation. The D1/D2 (PsbA/PsbD) reaction center heterodimer binds P680, the primary electron donor of PSII as well as several subsequent electron acceptors. D2 is needed for assembly of a stable PSII complex. The chain is Photosystem II D2 protein from Ranunculus macranthus (Large buttercup).